The sequence spans 197 residues: Protein GrpE (197 aa).

Positions 1–31 are enriched in basic and acidic residues; that stretch reads MSDDTKKQDTAADAEVEKEMEGVPEHLRDDR. The segment at 1-48 is disordered; it reads MSDDTKKQDTAADAEVEKEMEGVPEHLRDDRGSEEDASDDLSAALESL.

It belongs to the GrpE family. In terms of assembly, homodimer.

The protein localises to the cytoplasm. Its function is as follows. Participates actively in the response to hyperosmotic and heat shock by preventing the aggregation of stress-denatured proteins, in association with DnaK and GrpE. It is the nucleotide exchange factor for DnaK and may function as a thermosensor. Unfolded proteins bind initially to DnaJ; upon interaction with the DnaJ-bound protein, DnaK hydrolyzes its bound ATP, resulting in the formation of a stable complex. GrpE releases ADP from DnaK; ATP binding to DnaK triggers the release of the substrate protein, thus completing the reaction cycle. Several rounds of ATP-dependent interactions between DnaJ, DnaK and GrpE are required for fully efficient folding. This is Protein GrpE from Erythrobacter litoralis (strain HTCC2594).